We begin with the raw amino-acid sequence, 128 residues long: Type-4 ice-structuring protein LS-12 (128 aa).

The signal sequence occupies residues 1 to 20; that stretch reads MKFSLVATIVLLALAQGSFA. At Gln-21 the chain carries Pyrrolidone carboxylic acid.

The protein belongs to the apolipoprotein A1/A4/E family.

Its subcellular location is the secreted. Its function is as follows. Antifreeze proteins lower the blood freezing point. The sequence is that of Type-4 ice-structuring protein LS-12 from Myoxocephalus octodecemspinosus (Longhorn sculpin).